The primary structure comprises 283 residues: DegV domain-containing protein CPE0304 (283 aa).

The region spanning V3–R281 is the DegV domain. Hexadecanoate-binding residues include S60 and S92.

Its function is as follows. May bind long-chain fatty acids, such as palmitate, and may play a role in lipid transport or fatty acid metabolism. The polypeptide is DegV domain-containing protein CPE0304 (Clostridium perfringens (strain 13 / Type A)).